The primary structure comprises 588 residues: Juvenile hormone esterase (588 aa).

The signal sequence occupies residues 1 to 23 (MKFPKNLFLVLFYTSWKFCDVCA). N-linked (GlcNAc...) asparagine glycosylation is found at N79 and N83. A disulfide bridge links C91 with C109. S214 (acyl-ester intermediate) is an active-site residue. N257 is a glycosylation site (N-linked (GlcNAc...) asparagine). C268 and C281 are oxidised to a cystine. The active-site Charge relay system is the E350. N-linked (GlcNAc...) asparagine glycosylation is found at N389, N396, and N472. H479 acts as the Charge relay system in catalysis.

It belongs to the type-B carboxylesterase/lipase family.

The protein localises to the secreted. It carries out the reaction juvenile hormone III + H2O = juvenile hormone III carboxylate + methanol + H(+). Inhibited by 3-octylthio-1,1,1-trifluoro-2-propanone (OTFP), a specific inhibitor of juvenile hormone esterase (JHE), but not by diisopropyl fluorophosphate (DFP), a serine enzyme inhibitor. In terms of biological role, may function as a juvenile hormone (JH)-specific degradation enzyme in vivo decreasing JH activity. Hydrolyzes JH III in vitro. Hydrolyzes effectively also methyl hepthylthioacetothioate (HEPTAT), a synthetic substrate. Of the general esterase substrates, it has preference for 2-naphthyl acetate (2-NA) and shows a weak activity for 1-NA and 4-nitrophenylacetate (4-NPA). The chain is Juvenile hormone esterase from Tribolium castaneum (Red flour beetle).